The following is a 519-amino-acid chain: Membrane-bound glycerophospholipid O-acyltransferase 2 (519 aa).

6 helical membrane passes run 22–42, 61–81, 88–108, 184–204, 236–256, and 263–283; these read PIDQ…AVWF, TLLG…HFLV, CIMI…FALG, FMGI…FIEG, LLVC…LPVE, and FQAT…LLAA. Residues Asn341 and His372 contribute to the active site. The next 3 membrane-spanning stretches (helical) occupy residues 365 to 385, 415 to 435, and 443 to 463; these read FFLS…FLTG, LITW…FVLL, and FYSS…LLLP. The tract at residues 497–519 is disordered; it reads FSTMNNVCNQNRDTGSRHSSLTQ.

The protein belongs to the membrane-bound acyltransferase family. In terms of tissue distribution, highly expressed in epididymis, brain, testis, and ovary.

Its subcellular location is the endoplasmic reticulum membrane. It carries out the reaction a 1-acyl-sn-glycero-3-phosphocholine + an acyl-CoA = a 1,2-diacyl-sn-glycero-3-phosphocholine + CoA. It catalyses the reaction a 1-acyl-sn-glycero-3-phosphoethanolamine + an acyl-CoA = a 1,2-diacyl-sn-glycero-3-phosphoethanolamine + CoA. The enzyme catalyses a 1-O-(1Z-alkenyl)-sn-glycero-3-phosphocholine + (9Z)-octadecenoyl-CoA = 1-O-(1Z)-alkenyl-2-(9Z)-octadecenoyl-sn-glycero-3-phosphocholine + CoA. The catalysed reaction is a 1-O-(1Z-alkenyl)-sn-glycero-3-phosphoethanolamine + (9Z)-octadecenoyl-CoA = 1-O-(1Z)-alkenyl-2-(9Z)-octadecenoyl-sn-glycero-3-phosphoethanolamine + CoA. It carries out the reaction 1-octadecanoyl-sn-glycero-3-phosphoethanolamine + (9Z)-octadecenoyl-CoA = 1-octadecanoyl-2-(9Z-octadecenoyl)-sn-glycero-3-phosphoethanolamine + CoA. It catalyses the reaction 1-octadecanoyl-sn-glycero-3-phosphocholine + (9Z)-octadecenoyl-CoA = 1-octadecanoyl-2-(9Z-octadecenoyl)-sn-glycero-3-phosphocholine + CoA. The enzyme catalyses 1-(9Z-octadecenoyl)-sn-glycero-3-phosphoethanolamine + (9Z)-octadecenoyl-CoA = 1,2-di-(9Z-octadecenoyl)-sn-glycero-3-phosphoethanolamine + CoA. The catalysed reaction is 1-hexadecanoyl-sn-glycero-3-phosphoethanolamine + (9Z)-octadecenoyl-CoA = 1-hexadecanoyl-2-(9Z-octadecenoyl)-sn-glycero-3-phosphoethanolamine + CoA. It carries out the reaction 1-hexadecanoyl-sn-glycero-3-phosphocholine + (9Z)-octadecenoyl-CoA = 1-hexadecanoyl-2-(9Z-octadecenoyl)-sn-glycero-3-phosphocholine + CoA. It catalyses the reaction (9Z)-hexadecenoyl-CoA + 1-hexadecanoyl-sn-glycero-3-phosphocholine = 1-hexadecanoyl-2-(9Z-hexadecenoyl)-sn-glycero-3-phosphocholine + CoA. The enzyme catalyses 1-hexadecanoyl-sn-glycero-3-phosphoethanolamine + (9Z)-hexadecenoyl-CoA = 1-hexadecanoyl-2-(9Z)-hexadecenoyl-sn-glycero-3-phosphoethanolamine + CoA. The catalysed reaction is (9Z,12Z)-octadecadienoyl-CoA + 1-hexadecanoyl-sn-glycero-3-phosphocholine = 1-hexadecanoyl-2-(9Z,12Z-octadecadienoyl)-sn-glycero-3-phosphocholine + CoA. The protein operates within lipid metabolism; phospholipid metabolism. Partially inhibited by thimerosal. In terms of biological role, acyltransferase which catalyzes the transfer of an acyl group from an acyl-CoA to a lysophospholipid leading to the production of a phospholipid and participates in the reacylation step of the phospholipid remodeling pathway also known as the Lands cycle. Catalyzes the acylation of lysophosphatidylcholine (1-acyl-sn-glycero-3-phosphocholine or LPC) and to a lesser extend lysophosphatidylethanolamine (1-acyl-sn-glycero-3-phosphoethanolamine or LPE). Does not acylates lysophosphatidic acid (LPA) and lysophosphatidylserine. Prefers oleoyl-CoA as the acyl donor. May be involved in chondrocyte differentiation. The chain is Membrane-bound glycerophospholipid O-acyltransferase 2 from Mus musculus (Mouse).